The primary structure comprises 381 residues: Adenylate cyclase (381 aa).

Positions 1 to 30 (MTVDDTGSGADGDGRVDPEPAPDSADPGED) are disordered. A Guanylate cyclase domain is found at 191 to 300 (AVGFADLVGF…TTVNLASRLT (110 aa)). Mg(2+)-binding residues include Asp196 and Asp240.

The protein belongs to the adenylyl cyclase class-3 family. Requires Mg(2+) as cofactor.

It carries out the reaction ATP = 3',5'-cyclic AMP + diphosphate. This Streptomyces coelicolor (strain ATCC BAA-471 / A3(2) / M145) protein is Adenylate cyclase (cya).